The chain runs to 906 residues: Peroxisomal hydratase-dehydrogenase-epimerase (906 aa).

Short-chain dehydrogenase like stretches follow at residues 5 to 228 (DFKD…SSAE) and 319 to 532 (SLKD…GTDD). NADP(+) contacts are provided by isoleucine 13, lysine 52, asparagine 98, and lysine 131. Residues serine 149 and tyrosine 163 each act as proton donor in the active site. Residues tyrosine 163 and lysine 167 each coordinate NADP(+). Tyrosine 163 serves as the catalytic Proton acceptor. The Lowers pKa of active site Tyr role is filled by lysine 167. The active-site Proton acceptor is tyrosine 467. Residues 600 to 633 (AVGGDDDDDDEDEEEDEGDEEEDEEDEEEDDPVW) form a disordered region. Over residues 603 to 630 (GDDDDDDEDEEEDEGDEEEDEEDEEEDD) the composition is skewed to acidic residues. The (3R)-3-hydroxydecanoyl-CoA site is built by histidine 699, glycine 700, lysine 729, tyrosine 757, aspartate 808, asparagine 810, glycine 831, phenylalanine 856, threonine 857, and glycine 858. The 112-residue stretch at 782–893 (APKRAPDYQV…VVDRGTIAIN (112 aa)) folds into the MaoC-like domain. A Microbody targeting signal motif is present at residues 904-906 (AKI).

This sequence belongs to the short-chain dehydrogenases/reductases (SDR) family. As to quaternary structure, monomer.

The protein resides in the peroxisome. The catalysed reaction is a (3R)-3-hydroxyacyl-CoA = a (2E)-enoyl-CoA + H2O. The enzyme catalyses a (3R)-3-hydroxyacyl-CoA + NAD(+) = a 3-oxoacyl-CoA + NADH + H(+). It participates in lipid metabolism; fatty acid beta-oxidation. In terms of biological role, second trifunctional enzyme acting on the beta-oxidation pathway for fatty acids, possessing hydratase-dehydrogenase-epimerase activities. Converts trans-2-enoyl-CoA via D-3-hydroxyacyl-CoA to 3-ketoacyl-CoA. In Candida tropicalis (Yeast), this protein is Peroxisomal hydratase-dehydrogenase-epimerase.